Consider the following 871-residue polypeptide: Alanine--tRNA ligase (871 aa).

Zn(2+) contacts are provided by His563, His567, Cys665, and His669.

It belongs to the class-II aminoacyl-tRNA synthetase family. It depends on Zn(2+) as a cofactor.

The protein resides in the cytoplasm. The catalysed reaction is tRNA(Ala) + L-alanine + ATP = L-alanyl-tRNA(Ala) + AMP + diphosphate. Its function is as follows. Catalyzes the attachment of alanine to tRNA(Ala) in a two-step reaction: alanine is first activated by ATP to form Ala-AMP and then transferred to the acceptor end of tRNA(Ala). Also edits incorrectly charged Ser-tRNA(Ala) and Gly-tRNA(Ala) via its editing domain. This Christiangramia forsetii (strain DSM 17595 / CGMCC 1.15422 / KT0803) (Gramella forsetii) protein is Alanine--tRNA ligase.